Consider the following 399-residue polypeptide: Probable dual-specificity RNA methyltransferase RlmN (399 aa).

Glutamate 97 acts as the Proton acceptor in catalysis. One can recognise a Radical SAM core domain in the interval 103 to 381; sequence YPDRATVCVS…CTVRVERGVS (279 aa). Cysteine 110 and cysteine 386 are disulfide-bonded. Residues cysteine 117, cysteine 121, and cysteine 124 each coordinate [4Fe-4S] cluster. S-adenosyl-L-methionine contacts are provided by residues 203 to 204, serine 235, 258 to 260, and asparagine 343; these read GE and SLH. The S-methylcysteine intermediate role is filled by cysteine 386.

It belongs to the radical SAM superfamily. RlmN family. [4Fe-4S] cluster serves as cofactor.

It is found in the cytoplasm. The enzyme catalyses adenosine(2503) in 23S rRNA + 2 reduced [2Fe-2S]-[ferredoxin] + 2 S-adenosyl-L-methionine = 2-methyladenosine(2503) in 23S rRNA + 5'-deoxyadenosine + L-methionine + 2 oxidized [2Fe-2S]-[ferredoxin] + S-adenosyl-L-homocysteine. It carries out the reaction adenosine(37) in tRNA + 2 reduced [2Fe-2S]-[ferredoxin] + 2 S-adenosyl-L-methionine = 2-methyladenosine(37) in tRNA + 5'-deoxyadenosine + L-methionine + 2 oxidized [2Fe-2S]-[ferredoxin] + S-adenosyl-L-homocysteine. In terms of biological role, specifically methylates position 2 of adenine 2503 in 23S rRNA and position 2 of adenine 37 in tRNAs. This chain is Probable dual-specificity RNA methyltransferase RlmN, found in Roseiflexus sp. (strain RS-1).